A 188-amino-acid polypeptide reads, in one-letter code: Elongation factor P (188 aa).

It belongs to the elongation factor P family.

It localises to the cytoplasm. The protein operates within protein biosynthesis; polypeptide chain elongation. Its function is as follows. Involved in peptide bond synthesis. Stimulates efficient translation and peptide-bond synthesis on native or reconstituted 70S ribosomes in vitro. Probably functions indirectly by altering the affinity of the ribosome for aminoacyl-tRNA, thus increasing their reactivity as acceptors for peptidyl transferase. This Wolbachia sp. subsp. Brugia malayi (strain TRS) protein is Elongation factor P.